The chain runs to 272 residues: 3-methyl-2-oxobutanoate hydroxymethyltransferase (272 aa).

The Mg(2+) site is built by aspartate 43 and aspartate 82. Residues aspartate 43–serine 44, aspartate 82, and lysine 112 each bind 3-methyl-2-oxobutanoate. Glutamate 114 contacts Mg(2+). The Proton acceptor role is filled by glutamate 179.

It belongs to the PanB family. In terms of assembly, homodecamer; pentamer of dimers. Mg(2+) is required as a cofactor.

It is found in the cytoplasm. The catalysed reaction is 3-methyl-2-oxobutanoate + (6R)-5,10-methylene-5,6,7,8-tetrahydrofolate + H2O = 2-dehydropantoate + (6S)-5,6,7,8-tetrahydrofolate. The protein operates within cofactor biosynthesis; (R)-pantothenate biosynthesis; (R)-pantoate from 3-methyl-2-oxobutanoate: step 1/2. Catalyzes the reversible reaction in which hydroxymethyl group from 5,10-methylenetetrahydrofolate is transferred onto alpha-ketoisovalerate to form ketopantoate. The polypeptide is 3-methyl-2-oxobutanoate hydroxymethyltransferase (Staphylococcus epidermidis (strain ATCC 35984 / DSM 28319 / BCRC 17069 / CCUG 31568 / BM 3577 / RP62A)).